The sequence spans 526 residues: Seipin-2 (526 aa).

The disordered stretch occupies residues Pro-33–Lys-77. Positions Ser-58–Asp-70 are enriched in low complexity. The next 4 membrane-spanning stretches (helical) occupy residues Ser-195–Phe-215, Phe-224–Phe-243, Phe-258–Ser-278, and Leu-483–Cys-503.

It belongs to the seipin family. As to expression, expressed in seeds, seedlings, leaves, stems and roots. Not detected in flowers.

The protein localises to the endoplasmic reticulum membrane. Functionally, involved in lipid metabolism and lipid droplet (LD) morphology, number, and size. Supports the formation of small-sized LDs and modulates triacylglycerol accumulation. Induces probably a reorganization of the endoplasmic reticulum into LD-forming domains. This chain is Seipin-2, found in Arabidopsis thaliana (Mouse-ear cress).